A 607-amino-acid polypeptide reads, in one-letter code: Probable LRR receptor-like serine/threonine-protein kinase At5g65240 (607 aa).

Residues 1-24 form the signal peptide; that stretch reads MALLIITALVFSSLWSSVSPDAQG. Topologically, residues 25–219 are extracellular; that stretch reads DALFALRSSL…SGDSSSRKTG (195 aa). 2 N-linked (GlcNAc...) asparagine glycosylation sites follow: asparagine 74 and asparagine 110. 4 LRR repeats span residues 87 to 111, 112 to 135, 137 to 159, and 160 to 183; these read LTTL…IGNL, SSLT…LGNL, NLQF…LTGL, and SKLI…LFKI. 4 N-linked (GlcNAc...) asparagine glycosylation sites follow: asparagine 149, asparagine 171, asparagine 187, and asparagine 192. Residues 220–240 form a helical membrane-spanning segment; sequence IIAGVVSGIAVILLGFFFFFF. At 241–607 the chain is on the cytoplasmic side; the sequence is CKDKHKGYKR…QDAIELSGGR (367 aa). Threonine 281 carries the phosphothreonine modification. The Protein kinase domain occupies 284–568; the sequence is FSEKNVLGQG…EGEGLAERWE (285 aa). 290 to 298 is an ATP binding site; it reads LGQGGFGKV. At threonine 307 the chain carries Phosphothreonine. Lysine 312 is a binding site for ATP. Residue serine 365 is modified to Phosphoserine. Aspartate 411 (proton acceptor) is an active-site residue. Phosphothreonine is present on residues threonine 444, threonine 445, and threonine 450. The residue at position 460 (serine 460) is a Phosphoserine. Threonine 461 is modified (phosphothreonine). Serine 465 bears the Phosphoserine mark. A Phosphothreonine modification is found at threonine 541.

It belongs to the protein kinase superfamily. Ser/Thr protein kinase family.

The protein localises to the cell membrane. The enzyme catalyses L-seryl-[protein] + ATP = O-phospho-L-seryl-[protein] + ADP + H(+). It carries out the reaction L-threonyl-[protein] + ATP = O-phospho-L-threonyl-[protein] + ADP + H(+). In Arabidopsis thaliana (Mouse-ear cress), this protein is Probable LRR receptor-like serine/threonine-protein kinase At5g65240.